The chain runs to 150 residues: Large ribosomal subunit protein uL11 (150 aa).

The protein belongs to the universal ribosomal protein uL11 family. Part of the ribosomal stalk of the 50S ribosomal subunit. Interacts with L10 and the large rRNA to form the base of the stalk. L10 forms an elongated spine to which L12 dimers bind in a sequential fashion forming a multimeric L10(L12)X complex. In terms of processing, one or more lysine residues are methylated.

Its function is as follows. Forms part of the ribosomal stalk which helps the ribosome interact with GTP-bound translation factors. This chain is Large ribosomal subunit protein uL11, found in Jannaschia sp. (strain CCS1).